A 360-amino-acid chain; its full sequence is E3 ubiquitin-protein ligase HAKAI homolog (360 aa).

Basic and acidic residues predominate over residues 1–11; sequence MLQIRLRRDSP. The segment at 1 to 24 is disordered; it reads MLQIRLRRDSPTETGNGARPSPTE. The RING-type zinc-finger motif lies at 72-107; sequence CVRCDFPIAIYGRLIPCDHAFCLECARSDSICYLCD. A C2H2-type zinc finger spans residues 123–148; it reads FICAAPHCLRSFLKKLDFEAHVHDLH. A disordered region spans residues 156–360; sequence AEKEDGNQSD…QENRDGFGQE (205 aa). 3 stretches are compositionally biased toward polar residues: residues 163 to 179, 186 to 214, and 270 to 283; these read QSDV…SEST, SQLQ…QNYP, and YPTT…QFFN. Positions 293-304 are enriched in low complexity; the sequence is ESGGSEQSSLLG.

It belongs to the Hakai family. Interacts with MTB and VIR. Associates with MTA, MTB, FIP37 and VIR to form the m6A writer complex which is essential for adenosine methylation at specific mRNA sequences.

The protein resides in the nucleus speckle. The protein localises to the nucleus. It is found in the nucleoplasm. The enzyme catalyses S-ubiquitinyl-[E2 ubiquitin-conjugating enzyme]-L-cysteine + [acceptor protein]-L-lysine = [E2 ubiquitin-conjugating enzyme]-L-cysteine + N(6)-ubiquitinyl-[acceptor protein]-L-lysine.. Functionally, probable E3 ubiquitin-protein ligase which is a subunit of the N6-methyltransferase complex, a multiprotein complex that mediates N6-methyladenosine (m6A) methylation at the 5'-[AG]GAC-3' consensus sites of some mRNAs. Associates with MTA, MTB, FIP37 and VIR to form the m6A writer complex which is essential for adenosine methylation at specific mRNA sequences. N6-methyladenosine (m6A) plays a role in mRNA stability, processing, translation efficiency and editing. In Arabidopsis thaliana (Mouse-ear cress), this protein is E3 ubiquitin-protein ligase HAKAI homolog.